Consider the following 518-residue polypeptide: Xylose import ATP-binding protein XylG (518 aa).

2 consecutive ABC transporter domains span residues 6-245 and 262-507; these read LQMN…VGRE and FEAR…LSHS. 38–45 is a binding site for ATP; sequence GENGAGKS.

It belongs to the ABC transporter superfamily. Xylose importer (TC 3.A.1.2.4) family. In terms of assembly, the complex is composed of two ATP-binding proteins (XylG), two transmembrane proteins (XylH) and a solute-binding protein (XylF).

Its subcellular location is the cell inner membrane. The catalysed reaction is D-xylose(out) + ATP + H2O = D-xylose(in) + ADP + phosphate + H(+). In terms of biological role, part of the ABC transporter complex XylFGH involved in xylose import. Responsible for energy coupling to the transport system. The protein is Xylose import ATP-binding protein XylG of Pseudomonas syringae pv. syringae (strain B728a).